The primary structure comprises 274 residues: Penicillin-insensitive murein endopeptidase (274 aa).

The N-terminal stretch at 1–19 (MNKTAIALLALLASSVSLA) is a signal peptide. 3 cysteine pairs are disulfide-bonded: Cys44/Cys265, Cys187/Cys235, and Cys216/Cys223. Zn(2+) is bound by residues His110, His113, Asp120, Asp147, His150, and His211. Residues 227-274 (PLPPPGDGCGAELQSWFEPPKPGTTKPEKKTPPPLPPSCQALLDEHVI) are disordered.

Belongs to the peptidase M74 family. As to quaternary structure, dimer. Requires Zn(2+) as cofactor.

The protein localises to the periplasm. Murein endopeptidase that cleaves the D-alanyl-meso-2,6-diamino-pimelyl amide bond that connects peptidoglycan strands. Likely plays a role in the removal of murein from the sacculus. This chain is Penicillin-insensitive murein endopeptidase, found in Escherichia coli O157:H7.